The primary structure comprises 101 residues: MAAKLKKGDRVVVLAGKDKGKQGEITSVMPKDNKAVVEGVNIAIRHAKQTPTSQGGRIAKAMPIDLSNLALLDANGKATRVGFRFEGEKKVRYAKTTGDVI.

The protein belongs to the universal ribosomal protein uL24 family. As to quaternary structure, part of the 50S ribosomal subunit.

One of two assembly initiator proteins, it binds directly to the 5'-end of the 23S rRNA, where it nucleates assembly of the 50S subunit. Its function is as follows. One of the proteins that surrounds the polypeptide exit tunnel on the outside of the subunit. In Cereibacter sphaeroides (strain ATCC 17025 / ATH 2.4.3) (Rhodobacter sphaeroides), this protein is Large ribosomal subunit protein uL24.